Reading from the N-terminus, the 230-residue chain is Endonuclease NucS (230 aa).

The protein belongs to the NucS endonuclease family.

The protein localises to the cytoplasm. In terms of biological role, cleaves both 3' and 5' ssDNA extremities of branched DNA structures. This Corynebacterium aurimucosum (strain ATCC 700975 / DSM 44827 / CIP 107346 / CN-1) (Corynebacterium nigricans) protein is Endonuclease NucS.